The sequence spans 252 residues: Eukaryotic translation initiation factor 3 subunit K (252 aa).

The region spanning 46 to 225 is the PCI domain; that stretch reads FDCYANLALL…VKVPTNKENE (180 aa).

This sequence belongs to the eIF-3 subunit K family. As to quaternary structure, component of the eukaryotic translation initiation factor 3 (eIF-3) complex.

It localises to the cytoplasm. In terms of biological role, component of the eukaryotic translation initiation factor 3 (eIF-3) complex, which is involved in protein synthesis of a specialized repertoire of mRNAs and, together with other initiation factors, stimulates binding of mRNA and methionyl-tRNAi to the 40S ribosome. The eIF-3 complex specifically targets and initiates translation of a subset of mRNAs involved in cell proliferation. This is Eukaryotic translation initiation factor 3 subunit K from Aspergillus terreus (strain NIH 2624 / FGSC A1156).